A 438-amino-acid chain; its full sequence is GDP-mannose 6-dehydrogenase (438 aa).

Tyrosine 10, valine 11, aspartate 30, lysine 35, threonine 86, and threonine 124 together coordinate NAD(+). GDP-alpha-D-mannuronate-binding residues include glutamate 161, lysine 210, asparagine 214, histidine 217, asparagine 225, tyrosine 256, tyrosine 257, arginine 259, phenylalanine 262, and glycine 265. Cysteine 268 is an active-site residue. Lysine 271 contributes to the NAD(+) binding site. Lysine 324 is a binding site for GDP-alpha-D-mannuronate. Residue arginine 331 coordinates NAD(+).

The protein belongs to the UDP-glucose/GDP-mannose dehydrogenase family.

The enzyme catalyses GDP-alpha-D-mannose + 2 NAD(+) + H2O = GDP-alpha-D-mannuronate + 2 NADH + 3 H(+). It participates in glycan biosynthesis; alginate biosynthesis. In terms of biological role, catalyzes the oxidation of guanosine diphospho-D-mannose (GDP-D-mannose) to GDP-D-mannuronic acid, a precursor for alginate polymerization. The alginate layer causes a mucoid phenotype and provides a protective barrier against host immune defenses and antibiotics. The chain is GDP-mannose 6-dehydrogenase (algD) from Pseudomonas syringae pv. tomato (strain ATCC BAA-871 / DC3000).